The sequence spans 112 residues: Large ribosomal subunit protein eL36y (112 aa).

The span at 79-88 (KLGTHKRAKR) shows a compositional bias: basic residues. The interval 79-112 (KLGTHKRAKRKREEMSSVLRKMRSGGGGATEKKK) is disordered. Gly residues predominate over residues 102-112 (SGGGGATEKKK).

This sequence belongs to the eukaryotic ribosomal protein eL36 family.

The chain is Large ribosomal subunit protein eL36y (RPL36B) from Arabidopsis thaliana (Mouse-ear cress).